Consider the following 209-residue polypeptide: Protein lin-28 homolog A (209 aa).

The interval 1–31 (MGSVSNQQFAGGCAKAAEEAPEEAPEDAARA) is disordered. N-acetylglycine is present on G2. Position 3 is a phosphoserine (S3). Residues 39–112 (HGAGICKWFN…GLESIRVTGP (74 aa)) enclose the CSD domain. Residues 113–136 (GGVFCIGSERRPKGKSMQKRRSKG) are flexible linker. S120 is subject to Phosphoserine. CCHC-type zinc fingers lie at residues 137-154 (DRCYNCGGLDHHAKECKL) and 159-176 (KKCHFCQSISHMVASCPL). The segment at 178–209 (AQQGPSAQGKPTYFREEEEEIHSPTLLPEAQN) is disordered. S200 carries the post-translational modification Phosphoserine.

It belongs to the lin-28 family. As to quaternary structure, monomer. During skeletal muscle differentiation, associated with translation initiation complexes in the polysomal compartment. Directly interacts with EIF3S2. Interacts with NCL in an RNA-dependent manner. Interacts (via C-terminus) with DHX9 (via N- and C-terminus); this interaction occurs in a RNA-independent manner. Interacts with TUT4 in the presence of pre-let-7 RNA. Expressed in embryonic stem cells, placenta and testis. Tends to be up-regulated in HER2-overexpressing breast tumors.

It is found in the cytoplasm. Its subcellular location is the rough endoplasmic reticulum. The protein localises to the P-body. The protein resides in the stress granule. It localises to the nucleus. It is found in the nucleolus. RNA-binding protein that inhibits processing of pre-let-7 miRNAs and regulates translation of mRNAs that control developmental timing, pluripotency and metabolism. Seems to recognize a common structural G-quartet (G4) feature in its miRNA and mRNA targets. 'Translational enhancer' that drives specific mRNAs to polysomes and increases the efficiency of protein synthesis. Its association with the translational machinery and target mRNAs results in an increased number of initiation events per molecule of mRNA and, indirectly, in mRNA stabilization. Binds IGF2 mRNA, MYOD1 mRNA, ARBP/36B4 ribosomal protein mRNA and its own mRNA. Essential for skeletal muscle differentiation program through the translational up-regulation of IGF2 expression. Suppressor of microRNA (miRNA) biogenesis, including that of let-7, miR107, miR-143 and miR-200c. Specifically binds the miRNA precursors (pre-miRNAs), recognizing an 5'-GGAG-3' motif found in pre-miRNA terminal loop, and recruits TUT4 and TUT7 uridylyltransferases. This results in the terminal uridylation of target pre-miRNAs. Uridylated pre-miRNAs fail to be processed by Dicer and undergo degradation. The repression of let-7 expression is required for normal development and contributes to maintain the pluripotent state by preventing let-7-mediated differentiation of embryonic stem cells. Localized to the periendoplasmic reticulum area, binds to a large number of spliced mRNAs and inhibits the translation of mRNAs destined for the ER, reducing the synthesis of transmembrane proteins, ER or Golgi lumen proteins, and secretory proteins. Binds to and enhances the translation of mRNAs for several metabolic enzymes, such as PFKP, PDHA1 or SDHA, increasing glycolysis and oxidative phosphorylation. Which, with the let-7 repression may enhance tissue repair in adult tissue. This Homo sapiens (Human) protein is Protein lin-28 homolog A (LIN28A).